We begin with the raw amino-acid sequence, 525 residues long: GMP synthase [glutamine-hydrolyzing] (525 aa).

A Glutamine amidotransferase type-1 domain is found at 9–207; it reads RILILDFGSQ…VLEICGCAAL (199 aa). The active-site Nucleophile is the Cys-86. Residues His-181 and Glu-183 contribute to the active site. A GMPS ATP-PPase domain is found at 208 to 400; that stretch reads WTPATIIEDA…LGLPYDMLYR (193 aa). Position 235 to 241 (235 to 241) interacts with ATP; sequence SGGVDSS.

As to quaternary structure, homodimer.

It catalyses the reaction XMP + L-glutamine + ATP + H2O = GMP + L-glutamate + AMP + diphosphate + 2 H(+). The protein operates within purine metabolism; GMP biosynthesis; GMP from XMP (L-Gln route): step 1/1. Functionally, catalyzes the synthesis of GMP from XMP. The chain is GMP synthase [glutamine-hydrolyzing] from Edwardsiella ictaluri (strain 93-146).